The chain runs to 130 residues: uncharacterized protein (130 aa).

Over M1–K58 the chain is Cytoplasmic. Positions N34–K57 are disordered. A helical transmembrane segment spans residues D59–Q79. The Extracellular segment spans residues P80–L94. The helical transmembrane segment at F95–S115 threads the bilayer. Topologically, residues K116–R130 are cytoplasmic.

It localises to the membrane. This is an uncharacterized protein from Saccharomyces cerevisiae (strain ATCC 204508 / S288c) (Baker's yeast).